Consider the following 484-residue polypeptide: MLITKNQAEKWFDNSLGKQFNPDLFYGFQCYDYANMFFMIATGERLQGLYAYNIPFDNKARIEKYGQIIKNYDSFLPQKLDIVVFPSKYGGGAGHVEIVESANLNTFTSFGQNWNGKGWTNGVAQPGWGPETVTRHVHYYDDPMYFIRLNFPDKVSVGDKAKSVIKQATAKKQAVIKPKKIMLVAGHGYNDPGAVGNGTNERDFIRKYITPNIAKYLRHAGHEVALYGGSSQSQDMYQDTAYGVNVGNNKDYGLYWVKSHGYDIVLEIHLDAAGESASGGHVIISSQFNADTIDKSIQDVIKNNLGQIRGVTPRNDLLNVNVSAEININYRLSELGFITNKNDMDWIKKNYDLYSKLIAGAIHGKPIGGLVAGNVKTSAKNQKNPPVPAGYTLDKNNVPYKKETGYYTVANVKGNNVRDGYSTNSRITGVLPNNATIKYDGAYCINGYRWITYIANSGQRRYIATGEVDKAGNRISSFGKFSTI.

Residues 5–148 (KNQAEKWFDN…YYDDPMYFIR (144 aa)) form the Peptidase C51 domain. The 183-residue stretch at 181-363 (IMLVAGHGYN…YSKLIAGAIH (183 aa)) folds into the MurNAc-LAA domain. Residues 402–472 (KETGYYTVAN…IATGEVDKAG (71 aa)) enclose the SH3b domain.

It catalyses the reaction Hydrolyzes the link between N-acetylmuramoyl residues and L-amino acid residues in certain cell-wall glycopeptides.. Functionally, has weak lytic activity toward S.aureus cells. Full-length protein has no activity, but fusion of the Peptidase C51 domain to the lysostaphin SH3 cell wall binding domain yields an active chimeric enzyme, suggesting that PH may be functional. The chain is Probable autolysin PH from Staphylococcus aureus (strain NCTC 8325 / PS 47).